The chain runs to 307 residues: Elongation factor Ts (307 aa).

The tract at residues 79–82 is involved in Mg(2+) ion dislocation from EF-Tu; it reads TDFV.

This sequence belongs to the EF-Ts family.

It localises to the cytoplasm. In terms of biological role, associates with the EF-Tu.GDP complex and induces the exchange of GDP to GTP. It remains bound to the aminoacyl-tRNA.EF-Tu.GTP complex up to the GTP hydrolysis stage on the ribosome. The protein is Elongation factor Ts (tsf) of Bartonella quintana (strain Toulouse) (Rochalimaea quintana).